A 104-amino-acid polypeptide reads, in one-letter code: L-rhamnose mutarotase (104 aa).

Tyrosine 18 provides a ligand contact to substrate. The active-site Proton donor is the histidine 22. Residues tyrosine 41 and 76 to 77 (WW) contribute to the substrate site.

Belongs to the rhamnose mutarotase family. As to quaternary structure, homodimer.

It is found in the cytoplasm. It catalyses the reaction alpha-L-rhamnose = beta-L-rhamnose. The protein operates within carbohydrate metabolism; L-rhamnose metabolism. In terms of biological role, involved in the anomeric conversion of L-rhamnose. This chain is L-rhamnose mutarotase, found in Salmonella arizonae (strain ATCC BAA-731 / CDC346-86 / RSK2980).